The sequence spans 763 residues: Phosphoglycerol transferase I (763 aa).

The next 4 helical transmembrane spans lie at 1 to 21, 26 to 46, 77 to 97, and 108 to 128; these read MSELLSFALFLASVLIYAWKA, WWFAATLTVLGLFVVLNITLY, ILPGVGIVLALTAVFVSLGWI, and FGYSLLALLLALGSVDASPAF.

It belongs to the OpgB family.

It is found in the cell inner membrane. The catalysed reaction is a phosphatidylglycerol + a membrane-derived-oligosaccharide D-glucose = a 1,2-diacyl-sn-glycerol + a membrane-derived-oligosaccharide 6-(glycerophospho)-D-glucose.. It functions in the pathway glycan metabolism; osmoregulated periplasmic glucan (OPG) biosynthesis. Transfers a phosphoglycerol residue from phosphatidylglycerol to the membrane-bound nascent glucan backbones. The chain is Phosphoglycerol transferase I from Escherichia fergusonii (strain ATCC 35469 / DSM 13698 / CCUG 18766 / IAM 14443 / JCM 21226 / LMG 7866 / NBRC 102419 / NCTC 12128 / CDC 0568-73).